A 315-amino-acid chain; its full sequence is Ribosomal protein L11 methyltransferase (315 aa).

S-adenosyl-L-methionine is bound by residues Thr-163, Gly-185, Asp-207, and Asn-249.

It belongs to the methyltransferase superfamily. PrmA family.

It is found in the cytoplasm. The catalysed reaction is L-lysyl-[protein] + 3 S-adenosyl-L-methionine = N(6),N(6),N(6)-trimethyl-L-lysyl-[protein] + 3 S-adenosyl-L-homocysteine + 3 H(+). Its function is as follows. Methylates ribosomal protein L11. The sequence is that of Ribosomal protein L11 methyltransferase from Lactobacillus helveticus (strain DPC 4571).